An 81-amino-acid polypeptide reads, in one-letter code: UPF0180 protein YkuS (81 aa).

It belongs to the UPF0180 family.

The chain is UPF0180 protein YkuS (ykuS) from Bacillus subtilis (strain 168).